The sequence spans 298 residues: N-acetylmuramic acid 6-phosphate etherase (298 aa).

The region spanning 55 to 218 is the SIS domain; it reads IHAQVSGGGR…STGLMIKSGK (164 aa). Glu-83 functions as the Proton donor in the catalytic mechanism. Glu-114 is an active-site residue.

This sequence belongs to the GCKR-like family. MurNAc-6-P etherase subfamily. As to quaternary structure, homodimer.

The catalysed reaction is N-acetyl-D-muramate 6-phosphate + H2O = N-acetyl-D-glucosamine 6-phosphate + (R)-lactate. Its pathway is amino-sugar metabolism; 1,6-anhydro-N-acetylmuramate degradation. It participates in amino-sugar metabolism; N-acetylmuramate degradation. It functions in the pathway cell wall biogenesis; peptidoglycan recycling. In terms of biological role, specifically catalyzes the cleavage of the D-lactyl ether substituent of MurNAc 6-phosphate, producing GlcNAc 6-phosphate and D-lactate. Together with AnmK, is also required for the utilization of anhydro-N-acetylmuramic acid (anhMurNAc) either imported from the medium or derived from its own cell wall murein, and thus plays a role in cell wall recycling. The chain is N-acetylmuramic acid 6-phosphate etherase from Escherichia coli (strain SMS-3-5 / SECEC).